We begin with the raw amino-acid sequence, 286 residues long: UPF0725 protein At2g20620 (286 aa).

A disordered region spans residues Met1 to Lys49.

Belongs to the UPF0725 (EMB2204) family.

The polypeptide is UPF0725 protein At2g20620 (Arabidopsis thaliana (Mouse-ear cress)).